The sequence spans 203 residues: Enterotoxin-like toxin X (203 aa).

It belongs to the staphylococcal/streptococcal toxin family.

The protein localises to the secreted. In terms of biological role, plays a role in the inhibition of the host innate immune system. Inhibits phagocytosis and killing by human neutrophils by interacting with multiple neutrophil surface glycoproteins in a sialic acid-dependent manner. The sequence is that of Enterotoxin-like toxin X from Staphylococcus aureus (strain NCTC 8325 / PS 47).